Reading from the N-terminus, the 54-residue chain is Large ribosomal subunit protein bL33 (54 aa).

Belongs to the bacterial ribosomal protein bL33 family.

This chain is Large ribosomal subunit protein bL33, found in Xylella fastidiosa (strain M23).